We begin with the raw amino-acid sequence, 483 residues long: Septin-8 (483 aa).

The span at 1–16 (MAATDLERFSNAEPEP) shows a compositional bias: basic and acidic residues. Positions 1–22 (MAATDLERFSNAEPEPRSLSLG) are disordered. A2 carries the N-acetylalanine modification. A Phosphoserine modification is found at S10. Residues 41-307 (QGFSFNILCV…ELYRRCKLEE (267 aa)) enclose the Septin-type G domain. A G1 motif region spans residues 51–58 (GETGIGKS). GTP contacts are provided by residues 51-58 (GETGIGKS), G106, 187-195 (KADTISKSE), G241, and R256. The tract at residues 103–106 (DAVG) is G3 motif. Residues 186–189 (AKAD) form a G4 motif region. A coiled-coil region spans residues 320–413 (FSLQETYEAK…AVEALQSQAL (94 aa)). Positions 411-420 (QALHATSQQP) are enriched in polar residues. The segment at 411–443 (QALHATSQQPLRKDKDKKNRSDIGAHQPGMSLS) is disordered. Positions 421–433 (LRKDKDKKNRSDI) are enriched in basic and acidic residues.

It belongs to the TRAFAC class TrmE-Era-EngA-EngB-Septin-like GTPase superfamily. Septin GTPase family. In terms of assembly, septins polymerize into heterooligomeric protein complexes that form filaments, and can associate with cellular membranes, actin filaments and microtubules. GTPase activity is required for filament formation. Interacts with CDK14. Interacts with SEPTIN5. Interacts with SEPTIN7. Interacts with SEPTIN4. Interacts with VAMP2; the interaction inhibits interaction of VAMP2 with SYP. Interacts with STX1A. In terms of tissue distribution, widely expressed, including in brain, heart and platelets; most abundant in aorta. Isoform 2 is expressed at low levels in specific brain areas, such as occipital pole, frontal lobe, temporal lobe and putamen. Isoform 1 and 3 are highly expressed in specific brain areas, such as occipital pole, frontal lobe, temporal lobe and putamen. Isoform 2 is highly expressed in prostate, testis and ovary. Isoform 1 and isoform 3 are expressed at low levels in prostate, testis and ovary.

Its subcellular location is the cytoplasm. The protein localises to the cytoskeleton. It localises to the synapse. It is found in the cell projection. The protein resides in the axon. Its subcellular location is the cytoplasmic vesicle. The protein localises to the secretory vesicle. It localises to the synaptic vesicle membrane. It is found in the presynapse. Functionally, filament-forming cytoskeletal GTPase. May play a role in platelet secretion. Seems to participate in the process of SNARE complex formation in synaptic vesicles. In terms of biological role, stabilizes BACE1 protein levels and promotes the sorting and accumulation of BACE1 to the recycling or endosomal compartments, modulating the beta-amyloidogenic processing of APP. This chain is Septin-8, found in Homo sapiens (Human).